Reading from the N-terminus, the 554-residue chain is Chaperonin GroEL (554 aa).

Residues 30–33 (TLGP), Lys-51, 87–91 (DGTTT), Gly-416, and Asp-503 contribute to the ATP site.

This sequence belongs to the chaperonin (HSP60) family. In terms of assembly, forms a cylinder of 14 subunits composed of two heptameric rings stacked back-to-back. Interacts with the co-chaperonin GroES.

The protein localises to the cytoplasm. It carries out the reaction ATP + H2O + a folded polypeptide = ADP + phosphate + an unfolded polypeptide.. Functionally, together with its co-chaperonin GroES, plays an essential role in assisting protein folding. The GroEL-GroES system forms a nano-cage that allows encapsulation of the non-native substrate proteins and provides a physical environment optimized to promote and accelerate protein folding. The sequence is that of Chaperonin GroEL from Holospora obtusa.